A 329-amino-acid chain; its full sequence is MNNLNSVFDYEDIQLIPNKCVINSRLEADTSVKLGNFTFKLPVVPANMQTIIDDKIAEMLAKEGYFYIMHRFEAENRAAFIKKMHQQGLIASISVGVKADEHAFIREISADALIPEFITIDIAHGHADSVIKTIQLIKRLMPQTFVIAGNVGTPEAVRELENAGADATKVGIGPGKVCITKVKTGFGTGGWQLAAVKWCAKAASKPVIADGGIRTHGDIAKSIRMGATMVMVGSLFAAHEESPGQTVERDGQLFKEYFGSASEYQKGEHKNVEGKKILLPHKGSLKDTLKEMEEDLQSSISYAGGRDLSALTKVDYVVVKNSIWNGDAI.

C178 acts as the Thioimidate intermediate in catalysis. 207 to 230 contacts NADP(+); it reads VIADGGIRTHGDIAKSIRMGATMV.

The protein belongs to the IMPDH/GMPR family. GuaC type 2 subfamily.

It catalyses the reaction IMP + NH4(+) + NADP(+) = GMP + NADPH + 2 H(+). In terms of biological role, catalyzes the irreversible NADPH-dependent deamination of GMP to IMP. It functions in the conversion of nucleobase, nucleoside and nucleotide derivatives of G to A nucleotides, and in maintaining the intracellular balance of A and G nucleotides. The chain is GMP reductase from Lactococcus lactis subsp. lactis (strain IL1403) (Streptococcus lactis).